Consider the following 208-residue polypeptide: Ubiquitin-conjugating enzyme E2 S (208 aa).

Residues 14–160 (QTIRQVMREL…ARMMTEIHAQ (147 aa)) form the UBC core domain. Cysteine 98 (glycyl thioester intermediate) is an active-site residue. The tract at residues 159–208 (AQPAKCASTTSDAKDDDGPSTKKHAGLDKKLQDKKKEKLLKEKKRMLKRL) is disordered. Basic and acidic residues predominate over residues 170–198 (DAKDDDGPSTKKHAGLDKKLQDKKKEKLL). Residues 199 to 208 (KEKKRMLKRL) show a composition bias toward basic residues.

It belongs to the ubiquitin-conjugating enzyme family.

It carries out the reaction S-ubiquitinyl-[E1 ubiquitin-activating enzyme]-L-cysteine + [E2 ubiquitin-conjugating enzyme]-L-cysteine = [E1 ubiquitin-activating enzyme]-L-cysteine + S-ubiquitinyl-[E2 ubiquitin-conjugating enzyme]-L-cysteine.. Its pathway is protein modification; protein ubiquitination. In terms of biological role, catalyzes the covalent attachment of ubiquitin to other proteins. Acts as an essential factor of the anaphase promoting complex/cyclosome (APC/C), a cell cycle-regulated ubiquitin ligase that controls progression through mitosis. Acts by specifically elongating polyubiquitin chains initiated by the E2 enzyme vih/UbcH10 on APC/C substrates, enhancing the degradation of APC/C substrates by the proteasome and promoting mitotic exit. This is Ubiquitin-conjugating enzyme E2 S from Drosophila willistoni (Fruit fly).